The following is a 247-amino-acid chain: Uridylate kinase (247 aa).

17 to 20 (KFSG) is an ATP binding site. Position 59 (G59) interacts with UMP. G60 and R64 together coordinate ATP. UMP contacts are provided by residues D79 and 140 to 147 (TGNPFFTT). Positions 167, 173, and 176 each coordinate ATP.

It belongs to the UMP kinase family. Homohexamer.

The protein resides in the cytoplasm. It catalyses the reaction UMP + ATP = UDP + ADP. It functions in the pathway pyrimidine metabolism; CTP biosynthesis via de novo pathway; UDP from UMP (UMPK route): step 1/1. Inhibited by UTP. Its function is as follows. Catalyzes the reversible phosphorylation of UMP to UDP. This Legionella pneumophila subsp. pneumophila (strain Philadelphia 1 / ATCC 33152 / DSM 7513) protein is Uridylate kinase.